Reading from the N-terminus, the 556-residue chain is Formate--tetrahydrofolate ligase (556 aa).

ATP is bound at residue 65–72 (TPAGEGKT).

This sequence belongs to the formate--tetrahydrofolate ligase family.

The catalysed reaction is (6S)-5,6,7,8-tetrahydrofolate + formate + ATP = (6R)-10-formyltetrahydrofolate + ADP + phosphate. It functions in the pathway one-carbon metabolism; tetrahydrofolate interconversion. This chain is Formate--tetrahydrofolate ligase, found in Acetivibrio thermocellus (strain ATCC 27405 / DSM 1237 / JCM 9322 / NBRC 103400 / NCIMB 10682 / NRRL B-4536 / VPI 7372) (Clostridium thermocellum).